The primary structure comprises 515 residues: MVSIPEYYEGKNVLLTGATGFLGKVLLEKLLRSCPKVNSVYVLVRQKAGQTPQERVEEVLSGKLFDRLRDENPDFREKIIAINSELTQPKLALSEEDKEVIIESTNIIFHCAATVRFNENLRDAVQLNVIATRQLILLAQQMKNLEVFMHVSTAYAYCNRKHIDEVVYPPPVDPKKLIDSLEWMDDGLVNDITPKLIGDRPNTYIYTKALAEYVVQQEGAKLNVAIVRPSIVGASWKEPFPGWIDNFNGPSGLFIAAGKGILRTIRASNNALADLVPVDVVVNMSLAAAWYSGVNRPRNIMVYNCTTGSTNPFHWGEVEYHVISTFKRNPLEQAFRRPNVNLTSNHLLYHYWIAVSHKAPAFLYDIYLRMTGRSPRMMKTITRLHKAMVFLEYFTSNSWVWNTDNVNMLMNQLNPEDKKTFNIDVRQLHWAEYIENYCLGTKKYVLNEEMSGLPAARKHLNKLRNIRYGFNTILVILIWRIFIARSQMARNIWYFVVSLCYKFLSYFRASSTMRY.

Topologically, residues M1 to N465 are cytoplasmic. Residues S451 to F507 are necessary and sufficient for PEX19-mediated localization into peroxisome membrane. The chain crosses the membrane as a helical span at residues I466–I483. The Peroxisomal segment spans residues A484–Y515.

It belongs to the fatty acyl-CoA reductase family. Interacts with PEX19; PEX19 mediates the targeting of FAR1 to peroxisomes.

It is found in the peroxisome membrane. It carries out the reaction a long-chain fatty acyl-CoA + 2 NADPH + 2 H(+) = a long-chain primary fatty alcohol + 2 NADP(+) + CoA. It catalyses the reaction hexadecanoyl-CoA + 2 NADPH + 2 H(+) = hexadecan-1-ol + 2 NADP(+) + CoA. The catalysed reaction is octadecanoyl-CoA + 2 NADPH + 2 H(+) = octadecan-1-ol + 2 NADP(+) + CoA. The enzyme catalyses (9Z)-octadecenoyl-CoA + 2 NADPH + 2 H(+) = (9Z)-octadecen-1-ol + 2 NADP(+) + CoA. It carries out the reaction (9Z,12Z)-octadecadienoyl-CoA + 2 NADPH + 2 H(+) = (9Z,12Z)-octadecadien-1-ol + 2 NADP(+) + CoA. It catalyses the reaction eicosanoyl-CoA + 2 NADPH + 2 H(+) = eicosan-1-ol + 2 NADP(+) + CoA. The catalysed reaction is 16-methylheptadecanoyl-CoA + 2 NADPH + 2 H(+) = 16-methylheptadecan-1-ol + 2 NADP(+) + CoA. The enzyme catalyses 18-methylnonadecanoyl-CoA + 2 NADPH + 2 H(+) = 18-methylnonadecan-1-ol + 2 NADP(+) + CoA. Functionally, catalyzes the reduction of saturated and unsaturated C16 or C18 fatty acyl-CoA to fatty alcohols. It plays an essential role in the production of ether lipids/plasmalogens which synthesis requires fatty alcohols. In parallel, it is also required for wax monoesters production since fatty alcohols also constitute a substrate for their synthesis. This Pongo abelii (Sumatran orangutan) protein is Fatty acyl-CoA reductase 1.